The chain runs to 157 residues: Endoribonuclease YbeY (157 aa).

Zn(2+)-binding residues include H114, H118, and H124.

The protein belongs to the endoribonuclease YbeY family. Zn(2+) is required as a cofactor.

It localises to the cytoplasm. Single strand-specific metallo-endoribonuclease involved in late-stage 70S ribosome quality control and in maturation of the 3' terminus of the 16S rRNA. This chain is Endoribonuclease YbeY, found in Yersinia enterocolitica serotype O:8 / biotype 1B (strain NCTC 13174 / 8081).